The sequence spans 61 residues: Small ribosomal subunit protein uS14B (61 aa).

4 residues coordinate Zn(2+): cysteine 24, cysteine 27, cysteine 40, and cysteine 43.

Belongs to the universal ribosomal protein uS14 family. Zinc-binding uS14 subfamily. Part of the 30S ribosomal subunit. Contacts proteins S3 and S10. Zn(2+) serves as cofactor.

Its function is as follows. Binds 16S rRNA, required for the assembly of 30S particles and may also be responsible for determining the conformation of the 16S rRNA at the A site. The polypeptide is Small ribosomal subunit protein uS14B (Listeria welshimeri serovar 6b (strain ATCC 35897 / DSM 20650 / CCUG 15529 / CIP 8149 / NCTC 11857 / SLCC 5334 / V8)).